The primary structure comprises 201 residues: Recombination protein RecR (201 aa).

The C4-type zinc finger occupies 57 to 72 (CADCRTFTEQEVCNIC). The Toprim domain maps to 81-176 (GQICVVESPA…EASRIAHGVP (96 aa)).

It belongs to the RecR family.

Its function is as follows. May play a role in DNA repair. It seems to be involved in an RecBC-independent recombinational process of DNA repair. It may act with RecF and RecO. This is Recombination protein RecR from Escherichia coli O6:K15:H31 (strain 536 / UPEC).